An 85-amino-acid polypeptide reads, in one-letter code: MAHKKGASSSRNGRDSNAQRLGVKRFGGQVVLAGEIIVRQRGTHFHPGAGVGRGGDDTLFALVPGAVEFGTRRGRKVINIVAAGE.

A disordered region spans residues 1–20 (MAHKKGASSSRNGRDSNAQR). The span at 7–19 (ASSSRNGRDSNAQ) shows a compositional bias: polar residues.

Belongs to the bacterial ribosomal protein bL27 family.

The polypeptide is Large ribosomal subunit protein bL27 (Kineococcus radiotolerans (strain ATCC BAA-149 / DSM 14245 / SRS30216)).